A 341-amino-acid polypeptide reads, in one-letter code: MKKMMIATLAAASVLLAVANQAHAGATLDAVQKKGFVQCGISDGLPGFSYADADGKFSGIDVDVCRGVAAAVFGDDTKVKYTPLTAKERFTALQSGEVDLLSRNTTWTSSRDAGMGMAFTGVTYYDGIGFLTHDKAGLKSAKELDGATVCIQAGTDTELNVADYFKANNMKYTPVTFDRSDESAKALESGRCDTLASDQSQLYALRIKLSNPAEWIVLPEVISKEPLGPVVRRGDDEWFSIVRWTLFAMLNAEEMGINSQNVDEKAANPATPDMAHLLGKEGDYGKDLKLDNKWAYNIIKQVGNYSEIFERNVGSESPLKIKRGQNNLWNNGGIQYAPPVR.

The N-terminal stretch at 1-19 (MKKMMIATLAAASVLLAVA) is a signal peptide.

It belongs to the bacterial solute-binding protein 3 family.

The protein localises to the periplasm. Its function is as follows. Probably part of the binding-protein-dependent transport system YdhWXYZ for an amino acid. The protein is Putative amino-acid ABC transporter-binding protein YhdW (yhdW) of Escherichia coli O157:H7.